The primary structure comprises 228 residues: MNARVALQLSGIERHYGEGDTFLPILKGADLTLRSGETVALVAPSGTGKSTLLHIAGLLEHPDEGEVLVNGTSCNGLSDDRRTAIRRNEIGFVYQFHHLLPEFSALENIMMPQLIAGLPKAEAAERASALLDYMRIGHRGSHRPTELSGGEQQRVAIARAVANAPLILLADEPTGNLDPETAGYVFEALEALARQSGLAALIATHNHELASLMDRRVTIEDGKVVELK.

Positions 7-227 (LQLSGIERHY…TIEDGKVVEL (221 aa)) constitute an ABC transporter domain. Residue 43 to 50 (APSGTGKS) coordinates ATP.

It belongs to the ABC transporter superfamily. Lipoprotein translocase (TC 3.A.1.125) family. In terms of assembly, the complex is composed of two ATP-binding proteins (LolD) and two transmembrane proteins (LolC and LolE).

The protein localises to the cell inner membrane. Functionally, part of the ABC transporter complex LolCDE involved in the translocation of mature outer membrane-directed lipoproteins, from the inner membrane to the periplasmic chaperone, LolA. Responsible for the formation of the LolA-lipoprotein complex in an ATP-dependent manner. This Rhizobium meliloti (strain 1021) (Ensifer meliloti) protein is Lipoprotein-releasing system ATP-binding protein LolD.